Reading from the N-terminus, the 138-residue chain is Basic phospholipase A2 Tbo-G6D49 (138 aa).

The signal sequence occupies residues 1-16; the sequence is MRTLWIMAVLLVGVEG. Intrachain disulfides connect Cys42-Cys131, Cys44-Cys60, Cys59-Cys111, Cys65-Cys138, Cys66-Cys104, Cys73-Cys97, and Cys91-Cys102. Positions 43, 45, and 47 each coordinate Ca(2+). Residue His63 is part of the active site. Residue Asp64 coordinates Ca(2+). Residue Asp105 is part of the active site.

As to quaternary structure, monomer. Requires Ca(2+) as cofactor. Expressed by the venom gland.

It is found in the secreted. It catalyses the reaction a 1,2-diacyl-sn-glycero-3-phosphocholine + H2O = a 1-acyl-sn-glycero-3-phosphocholine + a fatty acid + H(+). Functionally, snake venom phospholipase A2 (PLA2) that impairs hemostasis. It weakly inhibits ADP-induced platelet aggregation when tested on platelet rich plasma from human and rabbit blood (15-25% of inhibition at 5-10 ug of enzyme), and dose-dependently inhibits blood coagulation, possibly by inhibiting thrombin activation. Exhibits strong hydrolytic activities toward L-dipalmitoyl phosphatidylcholine. PLA2 catalyzes the calcium-dependent hydrolysis of the 2-acyl groups in 3-sn-phosphoglycerides. This is Basic phospholipase A2 Tbo-G6D49 from Craspedocephalus borneensis (Borneo pit viper).